The chain runs to 61 residues: Large ribosomal subunit protein uL29 (61 aa).

This sequence belongs to the universal ribosomal protein uL29 family.

This Stenotrophomonas maltophilia (strain K279a) protein is Large ribosomal subunit protein uL29.